Reading from the N-terminus, the 443-residue chain is Tubulin beta-1 chain (443 aa).

Residues Gln11, Glu69, Ser138, Gly142, Thr143, Gly144, Asn204, and Asn226 each contribute to the GTP site. Residue Glu69 coordinates Mg(2+). Positions 424-443 (QYQDATAEREGEYEEDYDEA) are disordered. Residues 434–443 (GEYEEDYDEA) are compositionally biased toward acidic residues.

The protein belongs to the tubulin family. Dimer of alpha and beta chains. A typical microtubule is a hollow water-filled tube with an outer diameter of 25 nm and an inner diameter of 15 nM. Alpha-beta heterodimers associate head-to-tail to form protofilaments running lengthwise along the microtubule wall with the beta-tubulin subunit facing the microtubule plus end conferring a structural polarity. Microtubules usually have 13 protofilaments but different protofilament numbers can be found in some organisms and specialized cells. Mg(2+) serves as cofactor.

It is found in the cytoplasm. It localises to the cytoskeleton. Functionally, tubulin is the major constituent of microtubules, a cylinder consisting of laterally associated linear protofilaments composed of alpha- and beta-tubulin heterodimers. Microtubules grow by the addition of GTP-tubulin dimers to the microtubule end, where a stabilizing cap forms. Below the cap, tubulin dimers are in GDP-bound state, owing to GTPase activity of alpha-tubulin. This Anemia phyllitidis (Fern) protein is Tubulin beta-1 chain (TUBB1).